The chain runs to 886 residues: Peptidyl-lysine N-acetyltransferase PatZ (886 aa).

Residues 487-523 (QPILQAYGMNTLPTWIASDSTEAVHIAEQIGYPVALK) enclose the ATP-grasp domain. One can recognise an N-acetyltransferase domain in the interval 726-881 (CLFRPILPED…GIVGLTLNLA (156 aa)).

The protein in the N-terminal section; belongs to the acetate CoA ligase alpha subunit family. It in the central section; belongs to the acetate CoA ligase beta subunit family. As to quaternary structure, stable tetramer in solution. Oligomerizes to an octameric form by autoacetylation. Autoacetylated. Deacetylated by CobB.

The enzyme catalyses L-lysyl-[protein] + acetyl-CoA = N(6)-acetyl-L-lysyl-[protein] + CoA + H(+). In terms of biological role, catalyzes the acetyl-CoA-dependent acetylation of lysine residues of a large number of target proteins. Acetylates RNase R in exponential phase cells and RNase II. Required for the glucose-dependent acetylation on multiple lysines of alpha, beta and beta' RNAP subunits. Also acetylates acetyl-coenzyme A synthetase (Acs) and the chromosomal replication initiator protein DnaA, and inhibits their activity. Overexpression leads to the acetylation of a large number of additional proteins and inhibits motility. The sequence is that of Peptidyl-lysine N-acetyltransferase PatZ from Escherichia coli (strain K12).